The sequence spans 554 residues: Serine/threonine-protein kinase ROP18 (554 aa).

The chain crosses the membrane as a helical span at residues 17–40 (GLATLLPKTACLAGLNVALVFLLF). The 280-residue stretch at 252 to 531 (LVRGAPLGSG…PLQALETAAF (280 aa)) folds into the Protein kinase domain. Gly262, Ala264, and Lys281 together coordinate ATP. Asn306 carries N-linked (GlcNAc...) asparagine glycosylation. The ATP site is built by Met357, Ala359, and Asp362. An N-linked (GlcNAc...) asparagine glycan is attached at Asn377. The active-site Proton acceptor is the Asp409. Residue Asp427 participates in ATP binding. Asp427 lines the Mg(2+) pocket. A glycan (N-linked (GlcNAc...) asparagine) is linked at Asn434. A disulfide bridge links Cys478 with Cys497.

It belongs to the protein kinase superfamily. Ser/Thr protein kinase family. In terms of assembly, component of a complex at least composed of ROP18, GRA7 and ROP2. Component of a complex at least composed of ROP18 and ROP5. Interacts with GRA7 in the absence of ROP5. Interacts with mouse IRGB6 (TGTP1/TGTP2).

It is found in the parasitophorous vacuole membrane. It localises to the cytoplasmic vesicle. The protein localises to the secretory vesicle. Its subcellular location is the rhoptry. It carries out the reaction L-threonyl-[protein] + ATP = O-phospho-L-threonyl-[protein] + ADP + H(+). The catalysed reaction is L-seryl-[protein] + ATP = O-phospho-L-seryl-[protein] + ADP + H(+). Kinase activity is enhanced by polymorphic pseudokinase ROP5. Functionally, protein kinase. Virulence factor. Mediates parasite survival in mouse macrophages and monocytes. Reduces the accumulation of mouse IRGA6 (IIGP1) and IRGB6 (TGTP1/TGTP2), immunity-related GTPases (IRGs) that protect mice from infection by certain intracellular pathogens, on the parasitophorous vacuole and IRG-mediated killing of parasites by mouse cells; probably in connection with ROP5. In complex with GRA7, targets IRGs to prevent IRG-mediated parasite killing by mouse cells. Phosphorylates mouse IRGA6 (IIGP1); its activity toward mouse IRGA6 is promoted by GRA7 or ROP5. Phosphorylates mouse IRGB6 (TGTP1/TGTP2). Phosphorylates mouse IRGB10 (GM12250). Does not affect IFN-gamma (IFNG)-mediated parasite killing in human cells that do not possess the large variety of IRGs. The chain is Serine/threonine-protein kinase ROP18 from Toxoplasma gondii.